The following is a 203-amino-acid chain: Holliday junction branch migration complex subunit RuvA (203 aa).

A domain I region spans residues 1–63 (MIGKLSGKVD…EEHMHLYGFL (63 aa)). The interval 64 to 142 (TLEEKIFFNL…KISSGSAIIK (79 aa)) is domain II. The interval 143-149 (ESLNIKN) is flexible linker. A domain III region spans residues 150 to 203 (ITPVASNEVIKALVNLGFSRFEAQNAVQGIITQNPEISIDELIKTALKNRNSNF).

It belongs to the RuvA family. In terms of assembly, homotetramer. Forms an RuvA(8)-RuvB(12)-Holliday junction (HJ) complex. HJ DNA is sandwiched between 2 RuvA tetramers; dsDNA enters through RuvA and exits via RuvB. An RuvB hexamer assembles on each DNA strand where it exits the tetramer. Each RuvB hexamer is contacted by two RuvA subunits (via domain III) on 2 adjacent RuvB subunits; this complex drives branch migration. In the full resolvosome a probable DNA-RuvA(4)-RuvB(12)-RuvC(2) complex forms which resolves the HJ.

Its subcellular location is the cytoplasm. Its function is as follows. The RuvA-RuvB-RuvC complex processes Holliday junction (HJ) DNA during genetic recombination and DNA repair, while the RuvA-RuvB complex plays an important role in the rescue of blocked DNA replication forks via replication fork reversal (RFR). RuvA specifically binds to HJ cruciform DNA, conferring on it an open structure. The RuvB hexamer acts as an ATP-dependent pump, pulling dsDNA into and through the RuvAB complex. HJ branch migration allows RuvC to scan DNA until it finds its consensus sequence, where it cleaves and resolves the cruciform DNA. This is Holliday junction branch migration complex subunit RuvA from Rickettsia peacockii (strain Rustic).